Reading from the N-terminus, the 292-residue chain is Homoserine kinase (292 aa).

Position 84-94 (84-94 (PLSRGLGSSSA)) interacts with ATP.

The protein belongs to the GHMP kinase family. Homoserine kinase subfamily.

It localises to the cytoplasm. It carries out the reaction L-homoserine + ATP = O-phospho-L-homoserine + ADP + H(+). It functions in the pathway amino-acid biosynthesis; L-threonine biosynthesis; L-threonine from L-aspartate: step 4/5. Its function is as follows. Catalyzes the ATP-dependent phosphorylation of L-homoserine to L-homoserine phosphate. The polypeptide is Homoserine kinase (Campylobacter jejuni subsp. doylei (strain ATCC BAA-1458 / RM4099 / 269.97)).